A 185-amino-acid chain; its full sequence is Ribosome-recycling factor (185 aa).

Belongs to the RRF family.

The protein localises to the cytoplasm. In terms of biological role, responsible for the release of ribosomes from messenger RNA at the termination of protein biosynthesis. May increase the efficiency of translation by recycling ribosomes from one round of translation to another. This chain is Ribosome-recycling factor, found in Halalkalibacterium halodurans (strain ATCC BAA-125 / DSM 18197 / FERM 7344 / JCM 9153 / C-125) (Bacillus halodurans).